An 844-amino-acid polypeptide reads, in one-letter code: MAVKRFYKTFHPEHYDLRINVNRKNKTINGTSTITGDVFENPVLINQKFMTIDSVKVDGKNVDFDVIEKDEAIKIKTGVTGKAVIEIAYSAPLTDTMMGIYPSYYELEGKKKQIIGTQFETTFARQAFPCVDEPEAKATFSLALKWDEQDGEVALANMPEVEVDKDGYHHFEETVRMSSYLVAFAFGELQSKTTHTKDGVLIGVYATKAHKPKELDFALDIAKRAIEFYEEFYQTKYPLPQSLQLALPDFSAGAMENWGLVTYREAYLLLDPDNTSLEMKKLVATVITHELAHQWFGDLVTMKWWDNLWLNESFANMMEYLSVDGLEPDWHIWEMFQTSEASSALNRDATDGVQPIQMEINDPADIDSVFDSAIVYAKGSRMLVMVRSLLGDDALRKGLKYYFDHHKFGNATGDDLWDALSTATDLDIGKIMHSWLKQPGYPVVNAFVAEDGHLKLTQKQFFIGEGEDKGRQWQIPLNANFDAPKIMSDKEIDLGSYKVLREEAGHPLRLNVGNNSHFIVEYDKTLHDDILSDVNELDPIDKLQLLQDLRLLAEGKQISYASIVPLLVKFADSKSSLVINALYTTAAKLRQFVEPESNEEKNLKKLYDLLSKDQVARLGWEVKPGESDEDVQIRPYELSASLYAENADSIKAAHQIFTENEDNLEALNADIRPYVLINEVKNFGNAELVDKLIKEYQRTADPSYKVDLRSAVTSTKDLAAIKAIVGDFENADVVKPQDLCDWYRGLLANHYGQQAAWDWIREDWDWLDKTVGGDMEFAKFITVTAGVFHTPERLKEFKEFFEPKINVPLLSREIKMDVKVIESKVNLIEAEKDAVNDAVAKAID.

Residues glutamate 120 and 253-257 each bind substrate; that span reads GAMEN. Residue histidine 289 coordinates Zn(2+). Glutamate 290 functions as the Proton acceptor in the catalytic mechanism. Residues histidine 293 and glutamate 312 each contribute to the Zn(2+) site.

The protein belongs to the peptidase M1 family. As to quaternary structure, monomer. Requires Zn(2+) as cofactor.

The protein localises to the cytoplasm. The enzyme catalyses Release of an N-terminal amino acid, Xaa-|-Yaa- from a peptide, amide or arylamide. Xaa is preferably Ala, but may be most amino acids including Pro (slow action). When a terminal hydrophobic residue is followed by a prolyl residue, the two may be released as an intact Xaa-Pro dipeptide.. Its function is as follows. Aminopeptidase N is involved in the degradation of intracellular peptides generated by protein breakdown during normal growth as well as in response to nutrient starvation. In Lactobacillus helveticus (Lactobacillus suntoryeus), this protein is Aminopeptidase N (pepN).